The sequence spans 432 residues: MEEGCSTLVRSLEQKYLDDDEDIVQDIIFTGFTGCSPCKMASQRALELLVLNNMNIDTIGDSEKLATLASHVSEADLGWNQISKWSDIACILKNLPHLRVLNIGHNPLNPVIDHELPVSTLHTIILNGTHLPFKTLQSFLSVLPKVTELHMSDNQFNDDDDCDEPISTTVRTVHLNRCGFLKWSSVMNVVKRFPNVCSVFVCENPLKDVTHCKHFEQLPFWNFLNLAKTSIDSWDSLDQLNRMTSISDLRVPNIPLLDALTNEERLHLIIGRLHHLRVLNGSKISSEQREQSERFFIRYYQEQKEKPLQYKTLIDKHGNLEKLVTIDLTPKKEAVVKILCEEKEVNQEITISLEPTVLDFMKILDPKVGVKFTRMKLFLLREDGRTDDFSSSDYNMPLHYFKIEDGDSFLVQEKIIVTRRRRPPSSTSSSSS.

LRR repeat units follow at residues 69–94 (ASHVSEADLGWNQISKWSDIACILKN), 95–117 (LPHLRVLNIGHNPLNPVIDHELP), 118–140 (VSTLHTIILNGTHLPFKTLQSFL), 143–167 (LPKVTELHMSDNQFNDDDDCDEPIS), 168–191 (TTVRTVHLNRCGFLKWSSVMNVVK), 193–217 (FPNVCSVFVCENPLKDVTHCKHFEQ), and 218–242 (LPFWNFLNLAKTSIDSWDSLDQLNR). An LRRCT region spans residues 254–295 (IPLLDALTNEERLHLIIGRLHHLRVLNGSKISSEQREQSERF). A ubiquitin-like (UBL) region spans residues 324 to 415 (VTIDLTPKKE…GDSFLVQEKI (92 aa)).

It is found in the cytoplasm. It localises to the cytoskeleton. Its function is as follows. Acts as a regulator of tubulin stability. Involved in microtubule-dependent neuronal function. May be involved in tubulin acetylation/deacetylation pathway. This is Tubulin-specific chaperone cofactor E-like protein from Caenorhabditis elegans.